Reading from the N-terminus, the 409-residue chain is Nucleoprotein (409 aa).

Disordered stretches follow at residues 1-32 (MASG…SSGN), 46-68 (IPPP…SQQH), 164-196 (RSGR…EDDL), and 238-258 (VDQV…DDKM). The span at 15 to 31 (PVIKLGGPKPPKVGSSG) shows a compositional bias: low complexity. The tract at residues 29 to 160 (SSGNASWFQA…GNFRWDFIPL (132 aa)) is RNA-binding. Positions 31–156 (GNASWFQAIK…GGPDGNFRWD (126 aa)) constitute a CoV N NTD domain. A compositionally biased stretch (low complexity) spans 166–179 (GRSTAASSAASSRA). 2 stretches are compositionally biased toward basic and acidic residues: residues 180-192 (PSRE…RSGS) and 247-258 (KGKEGNFGDDKM). Residues S190 and S192 each carry the phosphoserine; by host modification. The region spanning 215-331 (TKAKADEMAH…QCVDGVGTRP (117 aa)) is the CoV N CTD domain. Residues 226–333 (RYCKRTIPPN…VDGVGTRPKD (108 aa)) are dimerization. A disulfide bridge connects residues C320 and C323. Residues 326-409 (GVGTRPKDDE…GDAALGENEL (84 aa)) are disordered. The segment covering 358 to 367 (QRPKKEKKPK) has biased composition (basic residues). The segment covering 368–384 (KHDDEVDKALTSDEERN) has biased composition (basic and acidic residues). A Phosphothreonine; by host modification is found at T378. Residue S379 is modified to Phosphoserine; by host.

It belongs to the gammacoronavirus nucleocapsid protein family. As to quaternary structure, homooligomer. Both monomeric and oligomeric forms interact with RNA. Interacts with protein M. Interacts with NSP3; this interaction serves to tether the genome to the newly translated replicase-transcriptase complex at a very early stage of infection. Post-translationally, ADP-ribosylated. The ADP-ribosylation is retained in the virion during infection. In terms of processing, phosphorylated on serine and threonine residues.

It localises to the virion. Its subcellular location is the host endoplasmic reticulum-Golgi intermediate compartment. The protein resides in the host Golgi apparatus. Functionally, packages the positive strand viral genome RNA into a helical ribonucleocapsid (RNP) and plays a fundamental role during virion assembly through its interactions with the viral genome and membrane protein M. Plays an important role in enhancing the efficiency of subgenomic viral RNA transcription as well as viral replication. The polypeptide is Nucleoprotein (Avian infectious bronchitis virus (strain M41) (IBV)).